The sequence spans 441 residues: MERDEEASGPMMEMCTNGGEETSNRRPIISGEPLDIEAYAALYKGRTKIMRLLFIANHCGGNHALQFDALRMAYDEIKKGENTQLFREVVNKIGNRLGEKYGMDLAWCEAVDRRAEQKKVKLENELSSYRTNLIKESIRMGYNDFGDFYYACGMLGDAFKNYIRTRDYCTTTKHIIHMCMNAILVSIEMGQFTHVTSYVNKAEQNPETLEPMVNAKLRCASGLAHLELKKYKLAARKFLDVNPELGNSYNEVIAPQDIATYGGLCALASFDRSELKQKVIDNINFRNFLELVPDVRELINDFYSSRYASCLEYLASLKSNLLLDIHLHDHVDTLYDQIRKKALIQYTLPFVSVDLSRMADAFKTSVSGLEKELEALITDNQIQARIDSHNKILYARHADQRNATFQKVLQMGNEFDRDVRAMLLRANLLKHEYHARSARKL.

The segment at 1 to 28 is disordered; sequence MERDEEASGPMMEMCTNGGEETSNRRPI. Positions 230 to 400 constitute a PCI domain; sequence KYKLAARKFL…KILYARHADQ (171 aa).

Belongs to the CSN1 family. As to quaternary structure, component of the CSN complex, probably composed of CSN1, CSN2, CSN3, CSN4, CSN5 (CSN5A or CSN5B), CSN6 (CSN6A or CSN6B), CSN7 and CSN8. Interacts with itself and (via PCI domain) with CSN7 (via PCI domain). In the CSN complex, it probably interacts directly with CSN2, CSN3, CSN4 and CSN5B. Interacts with the 26S proteasome subunit RPN6. Interacts (via N-terminal domain) with TSA1 (via C-terminal domain). Binds to the translation initiation factors TIF3C1, TIF3E1 and TIF3H1. In terms of tissue distribution, expressed in leaves, flowers, immature siliques, and light-grown roots.

It localises to the cytoplasm. The protein resides in the nucleus. Component of the COP9 signalosome complex (CSN), a complex involved in various cellular and developmental processes such as photomorphogenesis and auxin and jasmonate responses. The CSN complex is an essential regulator of the ubiquitin (Ubl) conjugation pathway by mediating the deneddylation of the cullin subunits of SCF-type E3 ligase complexes, leading to decrease the Ubl ligase activity of SCF. It is involved in repression of photomorphogenesis in darkness by regulating the activity of COP1-containing Ubl ligase complexes. The complex is also required for degradation of IAA6 by regulating the activity of the Ubl ligase SCF-TIR complex. In the complex, it plays a central role in CSN assembly. The polypeptide is COP9 signalosome complex subunit 1 (CSN1) (Arabidopsis thaliana (Mouse-ear cress)).